A 252-amino-acid polypeptide reads, in one-letter code: Carbohydrate deacetylase (252 aa).

H59 and H122 together coordinate Mg(2+).

The protein belongs to the YdjC deacetylase family. As to quaternary structure, homodimer. Requires Mg(2+) as cofactor.

Functionally, probably catalyzes the deacetylation of acetylated carbohydrates an important step in the degradation of oligosaccharides. The protein is Carbohydrate deacetylase of Vibrio vulnificus (strain YJ016).